Consider the following 138-residue polypeptide: ATP synthase epsilon chain (138 aa).

Belongs to the ATPase epsilon chain family. F-type ATPases have 2 components, CF(1) - the catalytic core - and CF(0) - the membrane proton channel. CF(1) has five subunits: alpha(3), beta(3), gamma(1), delta(1), epsilon(1). CF(0) has three main subunits: a, b and c.

It is found in the cell inner membrane. Its function is as follows. Produces ATP from ADP in the presence of a proton gradient across the membrane. This is ATP synthase epsilon chain from Bartonella quintana (strain Toulouse) (Rochalimaea quintana).